The following is a 328-amino-acid chain: Ribose-phosphate pyrophosphokinase (328 aa).

ATP is bound by residues 39 to 41 and 98 to 99; these read DGE and RQ. Residues histidine 132 and aspartate 172 each coordinate Mg(2+). Residue lysine 195 is part of the active site. Residues arginine 197, aspartate 221, and 225-229 each bind D-ribose 5-phosphate; that span reads DTGGT.

The protein belongs to the ribose-phosphate pyrophosphokinase family. Class I subfamily. Homohexamer. It depends on Mg(2+) as a cofactor.

It is found in the cytoplasm. It carries out the reaction D-ribose 5-phosphate + ATP = 5-phospho-alpha-D-ribose 1-diphosphate + AMP + H(+). Its pathway is metabolic intermediate biosynthesis; 5-phospho-alpha-D-ribose 1-diphosphate biosynthesis; 5-phospho-alpha-D-ribose 1-diphosphate from D-ribose 5-phosphate (route I): step 1/1. In terms of biological role, involved in the biosynthesis of the central metabolite phospho-alpha-D-ribosyl-1-pyrophosphate (PRPP) via the transfer of pyrophosphoryl group from ATP to 1-hydroxyl of ribose-5-phosphate (Rib-5-P). The sequence is that of Ribose-phosphate pyrophosphokinase from Mycoplasma pneumoniae (strain ATCC 29342 / M129 / Subtype 1) (Mycoplasmoides pneumoniae).